The primary structure comprises 323 residues: Aldo-keto reductase family 1 member C4 (323 aa).

Residues 20 to 24 and D50 each bind NADP(+); that span reads GFGTY. Residue Y55 is the Proton donor of the active site. A substrate-binding site is contributed by H117. Residues 166–167, Q190, 216–221, and 270–280 contribute to the NADP(+) site; these read SN, HSALGT, and KSYNEQRIREN.

It belongs to the aldo/keto reductase family. In terms of assembly, monomer. Post-translationally, the N-terminus is blocked. In terms of tissue distribution, liver specific.

It is found in the cytoplasm. Its subcellular location is the cytosol. The catalysed reaction is a 3alpha-hydroxysteroid + NADP(+) = a 3-oxosteroid + NADPH + H(+). It catalyses the reaction a 3alpha-hydroxysteroid + NAD(+) = a 3-oxosteroid + NADH + H(+). The enzyme catalyses 5alpha-androstane-3alpha,17beta-diol + NADP(+) = 17beta-hydroxy-5alpha-androstan-3-one + NADPH + H(+). It carries out the reaction 5alpha-androstane-3beta,17beta-diol + NADP(+) = 17beta-hydroxy-5alpha-androstan-3-one + NADPH + H(+). The catalysed reaction is 5alpha-androstane-3alpha,17beta-diol + NAD(+) = 17beta-hydroxy-5alpha-androstan-3-one + NADH + H(+). It catalyses the reaction 17beta-estradiol + NADP(+) = estrone + NADPH + H(+). The enzyme catalyses 17beta-estradiol + NAD(+) = estrone + NADH + H(+). It carries out the reaction (20S)-hydroxypregn-4-en-3-one + NADP(+) = progesterone + NADPH + H(+). The catalysed reaction is (20S)-hydroxypregn-4-en-3-one + NAD(+) = progesterone + NADH + H(+). It catalyses the reaction androsterone + NADP(+) = 5alpha-androstan-3,17-dione + NADPH + H(+). The enzyme catalyses testosterone + NADP(+) = androst-4-ene-3,17-dione + NADPH + H(+). It carries out the reaction testosterone + NAD(+) = androst-4-ene-3,17-dione + NADH + H(+). The catalysed reaction is 3alpha-hydroxy-5alpha-androstane 17-O-(beta-D-glucuronate) + NADP(+) = 5alpha-dihydrotestosterone 17-O-(beta-D-glucuronate) + NADPH + H(+). It catalyses the reaction (3beta,5alpha,17beta)-3-hydroxy-androstan-17-yl sulfate + NADP(+) = 5alpha-dihydrotestosterone sulfate + NADPH + H(+). The enzyme catalyses 5alpha-androstane-3alpha,17beta-diol + NAD(+) = androsterone + NADH + H(+). It carries out the reaction chlordecone alcohol + NADP(+) = chlordecone + NADPH + H(+). The protein operates within steroid metabolism. Inhibited by nonsteroidal the anti-inflammatory drugs (NSAID) flufenamic. The oxidation reaction is inhibited by low micromolar concentrations of NADPH. Functionally, cytosolic aldo-keto reductase that catalyzes the NADH and NADPH-dependent reduction of ketosteroids to hydroxysteroids. Liver specific enzyme that acts as an NAD(P)(H)-dependent 3-, 17- and 20-ketosteroid reductase on the steroid nucleus and side chain. Displays the ability to catalyze both oxidation and reduction in vitro, but most probably acts as a reductase in vivo since the oxidase activity measured in vitro is inhibited by physiological concentration of NADPH. Acts preferentially as a 3-alpha-hydroxysteroid dehydrogenase (HSD) with a subsidiary 3-beta-HSD activity. Catalyzes efficiently the transformation of the potent androgen 5-alpha-dihydrotestosterone (5alpha-DHT or 17beta-hydroxy-5alpha-androstan-3-one) into the less active form, 5-alpha-androstan-3-alpha,17-beta-diol (3-alpha-diol). Catalyzes the reduction of estrone into 17beta-estradiol but with low efficiency. Metabolizes a broad spectrum of natural and synthetic therapeutic steroid and plays an important role in metabolism of androgens, estrogens, progestereone and conjugated steroids. Catalyzes the biotransformation of the pesticide chlordecone (kepone) to its corresponding alcohol leading to increased biliary excretion of the pesticide and concomitant reduction of its neurotoxicity since bile is the major excretory route. This Homo sapiens (Human) protein is Aldo-keto reductase family 1 member C4 (AKR1C4).